The primary structure comprises 309 residues: MSYFKTAILLAGLTALFMGVGYLIGGASGAMIALVVAAATNIFAYWNSDKMVLSMYGAQQVDERSAPDLVRMVAGLAGNAQLPMPKVFIMDNPQPNAFATGRNPENAAVAVTTGLMQSLSREELAGVIAHELAHVKNHDTLLMTVTATIAGAVSMLAQFGMFFGGNRDNNNGGLGVIGSIAMMILAPIAAMLVQMAISRSREYAADDLGARICGQPTWLASALAKIENAAHQVPNYDAERAPATAHMFIINPLTGQGMDNLFATHPSTQNRIAALQQLATTLGIRAPQRAAAPARGLWGGAPRSRGPWG.

2 consecutive transmembrane segments (helical) span residues 7–27 (AILLAGLTALFMGVGYLIGGA) and 28–48 (SGAMIALVVAAATNIFAYWNS). Residue His-130 participates in Zn(2+) binding. Glu-131 is an active-site residue. Position 134 (His-134) interacts with Zn(2+). The next 2 membrane-spanning stretches (helical) occupy residues 145–165 (VTATIAGAVSMLAQFGMFFGG) and 173–193 (GLGVIGSIAMMILAPIAAMLV). Glu-202 is a Zn(2+) binding site.

This sequence belongs to the peptidase M48B family. It depends on Zn(2+) as a cofactor.

It localises to the cell inner membrane. This is Protease HtpX homolog from Rhodopseudomonas palustris (strain BisA53).